The chain runs to 244 residues: INO80 complex subunit E (244 aa).

Positions D10–L54 form a coiled coil. The interval V63–D236 is disordered. The span at P99–S115 shows a compositional bias: low complexity. Positions R157–K171 are enriched in basic residues. Glycyl lysine isopeptide (Lys-Gly) (interchain with G-Cter in SUMO2) cross-links involve residues K159 and K171. Positions P202 to T212 are enriched in pro residues.

Component of the chromatin remodeling INO80 complex; specifically part of a complex module associated with the N-terminus of INO80.

It localises to the nucleus. In terms of biological role, putative regulatory component of the chromatin remodeling INO80 complex which is involved in transcriptional regulation, DNA replication and probably DNA repair. The polypeptide is INO80 complex subunit E (INO80E) (Homo sapiens (Human)).